The primary structure comprises 253 residues: Phosphate import ATP-binding protein PstB (253 aa).

The ABC transporter domain maps to 5 to 248; that stretch reads IQVRDLNAYY…PSDKRTEDYI (244 aa). 37–44 is an ATP binding site; sequence GPSGCGKS.

Belongs to the ABC transporter superfamily. Phosphate importer (TC 3.A.1.7) family. In terms of assembly, the complex is composed of two ATP-binding proteins (PstB), two transmembrane proteins (PstC and PstA) and a solute-binding protein (PstS).

The protein localises to the cell inner membrane. The enzyme catalyses phosphate(out) + ATP + H2O = ADP + 2 phosphate(in) + H(+). In terms of biological role, part of the ABC transporter complex PstSACB involved in phosphate import. Responsible for energy coupling to the transport system. The polypeptide is Phosphate import ATP-binding protein PstB (Koribacter versatilis (strain Ellin345)).